The chain runs to 344 residues: Cell adhesion molecule CEACAM6 (344 aa).

The signal sequence occupies residues 1-34 (MGPPSAPPCRLHVPWKEVLLTASLLTFWNPPTTA). An Ig-like V-type domain is found at 35 to 142 (KLTIESTPFN…EATGQFHVYP (108 aa)). Residues Asn104, Asn111, Asn115, Asn152, Asn173, Asn197, Asn224, Asn256, Asn274, Asn288, Asn292, and Asn309 are each glycosylated (N-linked (GlcNAc...) asparagine). Ig-like C2-type domains are found at residues 145 to 232 (PKPS…VTLN) and 240 to 314 (PTIS…TTVT). The cysteines at positions 167 and 215 are disulfide-linked. A disulfide bridge links Cys259 with Cys299. Residue Gly320 is the site of GPI-anchor amidated glycine attachment. The propeptide at 321–344 (SAPVLSAVATVGITIGVLARVALI) is removed in mature form.

Belongs to the immunoglobulin superfamily. CEA family. As to quaternary structure, homodimer; homodimerizes via its Ig-like V-type domain. Heterodimer with CEACAM8; heterodimerizes via its Ig-like V-type domain. Glycosylated. In terms of tissue distribution, expressed in neutrophils. Expressed in columnar epithelial and goblet cells of the colon. Expressed in numerous tumor cell lines (at protein level).

It localises to the cell membrane. The protein localises to the apical cell membrane. It is found in the cell surface. Its function is as follows. Cell surface glycoprotein that plays a role in cell adhesion and tumor progression. Intercellular adhesion occurs in a calcium- and fibronectin-independent manner. Mediates homophilic and heterophilic cell adhesion with other carcinoembryonic antigen-related cell adhesion molecules, such as CEACAM5 and CEACAM8. Heterophilic interaction with CEACAM8 occurs in activated neutrophils. Plays a role in neutrophil adhesion to cytokine-activated endothelial cells. Plays a role in cell migration and cell adhesion to endothelial cells. The protein is Cell adhesion molecule CEACAM6 of Homo sapiens (Human).